A 227-amino-acid chain; its full sequence is MASPSRQPPLGGSGLLRGSRARSYGSLVQSSCSPVRERRLEHQLEPGDTLAGLALKYGVTMEQIKRTNRLYTNDSIFLKKTLYIPILTEPRDLFNGLDSEEEENDGEEEVRPSKDEIGSSSGKRKNQGSASSQPKGTGLPPHQGTSTPSHDLSASDFLKKLDSQISLSKKAAAQKLRKGESGVPEEDTGLYPSSPRMQQRAVLGPVPLTRTSRTQTLRDQEDEIFKL.

Phosphoserine occurs at positions 23 and 33. Residues 40–84 (LEHQLEPGDTLAGLALKYGVTMEQIKRTNRLYTNDSIFLKKTLYI) enclose the LysM domain. The tract at residues 95-157 (NGLDSEEEEN…PSHDLSASDF (63 aa)) is disordered. Positions 98-108 (DSEEEENDGEE) are enriched in acidic residues. Phosphoserine is present on Ser-99. Residues 143–152 (QGTSTPSHDL) are compositionally biased toward polar residues. 4 positions are modified to phosphoserine: Ser-166, Ser-181, Ser-194, and Ser-212. The segment at 169–227 (KKAAAQKLRKGESGVPEEDTGLYPSSPRMQQRAVLGPVPLTRTSRTQTLRDQEDEIFKL) is disordered. A compositionally biased stretch (basic and acidic residues) spans 216–227 (TLRDQEDEIFKL).

This is LysM and putative peptidoglycan-binding domain-containing protein 1 (Lysmd1) from Rattus norvegicus (Rat).